The primary structure comprises 235 residues: Octanoyltransferase (235 aa).

Positions 30–214 constitute a BPL/LPL catalytic domain; sequence NELEDTLLLL…YFGKVFGAKF (185 aa). Residues 75–82, 144–146, and 157–159 contribute to the substrate site; these read RGGDVTYH, AIG, and GFA. Cys-175 serves as the catalytic Acyl-thioester intermediate.

Belongs to the LipB family.

It is found in the cytoplasm. It catalyses the reaction octanoyl-[ACP] + L-lysyl-[protein] = N(6)-octanoyl-L-lysyl-[protein] + holo-[ACP] + H(+). Its pathway is protein modification; protein lipoylation via endogenous pathway; protein N(6)-(lipoyl)lysine from octanoyl-[acyl-carrier-protein]: step 1/2. Functionally, catalyzes the transfer of endogenously produced octanoic acid from octanoyl-acyl-carrier-protein onto the lipoyl domains of lipoate-dependent enzymes. Lipoyl-ACP can also act as a substrate although octanoyl-ACP is likely to be the physiological substrate. The polypeptide is Octanoyltransferase (Caldicellulosiruptor saccharolyticus (strain ATCC 43494 / DSM 8903 / Tp8T 6331)).